Consider the following 246-residue polypeptide: Probable septum site-determining protein MinC (246 aa).

This sequence belongs to the MinC family. Interacts with MinD and FtsZ.

In terms of biological role, cell division inhibitor that blocks the formation of polar Z ring septums. Rapidly oscillates between the poles of the cell to destabilize FtsZ filaments that have formed before they mature into polar Z rings. Prevents FtsZ polymerization. The chain is Probable septum site-determining protein MinC from Pseudomonas syringae pv. syringae (strain B728a).